A 321-amino-acid polypeptide reads, in one-letter code: MESPNHTDVDPSVFFLLGIPGLEQFHLWLSLPVCGLGTATIVGNITILVVVATEPVLHKPVYLFLCMLSTIDLAASVSTVPKLLAIFWCGAGHISASACLAQMFFIHAFCMMESTVLLAMAFDRYVAICHPLRYATILTDTIIAHIGVAAVVRGSLLMLPCPFLIGRLNFCQSHVILHTYCEHMAVVKLACGDTRPNRVYGLTAALLVIGVDLFCIGLSYALSAQAVLRLSSHEARSKALGTCGSHVCVILISYTPALFSFFTHRFGHHVPVHIHILLANVYLLLPPALNPVVYGVKTKQIRKRVVRVFQSGQGMGIKASE.

The Extracellular segment spans residues 1 to 27 (MESPNHTDVDPSVFFLLGIPGLEQFHL). Asparagine 5 is a glycosylation site (N-linked (GlcNAc...) asparagine). Residues 28-48 (WLSLPVCGLGTATIVGNITIL) form a helical membrane-spanning segment. The Cytoplasmic segment spans residues 49–56 (VVVATEPV). A helical membrane pass occupies residues 57 to 77 (LHKPVYLFLCMLSTIDLAASV). Residues 78–101 (STVPKLLAIFWCGAGHISASACLA) lie on the Extracellular side of the membrane. Cysteine 99 and cysteine 191 are joined by a disulfide. Residues 102–122 (QMFFIHAFCMMESTVLLAMAF) traverse the membrane as a helical segment. Residues 123-141 (DRYVAICHPLRYATILTDT) lie on the Cytoplasmic side of the membrane. Residues 142 to 162 (IIAHIGVAAVVRGSLLMLPCP) form a helical membrane-spanning segment. Residues 163–198 (FLIGRLNFCQSHVILHTYCEHMAVVKLACGDTRPNR) are Extracellular-facing. Residues 199-219 (VYGLTAALLVIGVDLFCIGLS) form a helical membrane-spanning segment. Residues 220 to 239 (YALSAQAVLRLSSHEARSKA) lie on the Cytoplasmic side of the membrane. The chain crosses the membrane as a helical span at residues 240–260 (LGTCGSHVCVILISYTPALFS). At 261–275 (FFTHRFGHHVPVHIH) the chain is on the extracellular side. The chain crosses the membrane as a helical span at residues 276–296 (ILLANVYLLLPPALNPVVYGV). At 297 to 315 (KTKQIRKRVVRVFQSGQGM) the chain is on the cytoplasmic side.

Belongs to the G-protein coupled receptor 1 family.

The protein localises to the cell membrane. Its function is as follows. Odorant receptor. In Homo sapiens (Human), this protein is Olfactory receptor 52P1.